The chain runs to 327 residues: MKRIYLALCALLLLLGTGSRPAAAYPYYAQMAYDNPREATGKIVCANCHLNAMPARAEVPQAVTPGQVFTIKVGIPYDLSKQQVLADGSKGGLNVGAVVVLPEGFRLATEEEMTEEQRQETAETYITPYSDEKPNILLVGPLPGEQHQEIVFPVVAPDPKEDPSVAFMKYRVYIGANRGRGQINPDGSLSNNNVFRAPATGRLTSIATIESDLSDLPPELAALVPPEYELPGTRVLSFETEGGLKHLVVPPGPELVVNIGDSVQEGDPVTNNPNVGGFGQVERDLVLQNPERVKWLVAFLAAVAITQLLLVLKKKQVELIQAAELLG.

Positions 1 to 24 (MKRIYLALCALLLLLGTGSRPAAA) are cleaved as a signal peptide. Heme is bound by residues Tyr-25, Cys-45, Cys-48, and His-49. Residues 293–313 (VKWLVAFLAAVAITQLLLVLK) traverse the membrane as a helical segment.

It belongs to the cytochrome f family. The 4 large subunits of the cytochrome b6-f complex are cytochrome b6, subunit IV (17 kDa polypeptide, PetD), cytochrome f and the Rieske protein, while the 4 small subunits are PetG, PetL, PetM and PetN. The complex functions as a dimer. The cofactor is heme.

The protein resides in the cellular thylakoid membrane. Its function is as follows. Component of the cytochrome b6-f complex, which mediates electron transfer between photosystem II (PSII) and photosystem I (PSI), cyclic electron flow around PSI, and state transitions. This chain is Cytochrome f, found in Synechococcus sp. (strain JA-3-3Ab) (Cyanobacteria bacterium Yellowstone A-Prime).